A 1357-amino-acid polypeptide reads, in one-letter code: DNA-directed RNA polymerase subunit beta (1357 aa).

This sequence belongs to the RNA polymerase beta chain family. As to quaternary structure, the RNAP catalytic core consists of 2 alpha, 1 beta, 1 beta' and 1 omega subunit. When a sigma factor is associated with the core the holoenzyme is formed, which can initiate transcription.

It catalyses the reaction RNA(n) + a ribonucleoside 5'-triphosphate = RNA(n+1) + diphosphate. In terms of biological role, DNA-dependent RNA polymerase catalyzes the transcription of DNA into RNA using the four ribonucleoside triphosphates as substrates. The sequence is that of DNA-directed RNA polymerase subunit beta from Pseudomonas aeruginosa (strain LESB58).